The following is a 487-amino-acid chain: UDP-glucosyl transferase 73CC6 (487 aa).

H17 acts as the Proton acceptor in catalysis. Residue D114 is the Charge relay of the active site. 8 residues coordinate UDP: S282, W346, A347, H364, N368, S369, E372, and Y386.

This sequence belongs to the UDP-glycosyltransferase family. Mainly expressed in flowers and flower buds and, to a lesser extent, in leaves, stems and roots.

The protein operates within secondary metabolite biosynthesis; terpenoid biosynthesis. In terms of biological role, component of the oleanane-type triterpene saponins (e.g. saponarioside A and saponarioside B) biosynthetic pathway, leading to the production of natural products with detergent properties used as traditional sources of soap. A glycosyltransferase that mediates the conversion of QA-di to QA-tri via the elongation of the C-3 sugar chain with a D-xylose. This chain is UDP-glucosyl transferase 73CC6, found in Saponaria officinalis (Common soapwort).